Here is a 92-residue protein sequence, read N- to C-terminus: Putative regulatory protein CA_C1717 (92 aa).

The protein belongs to the RemA family.

This Clostridium acetobutylicum (strain ATCC 824 / DSM 792 / JCM 1419 / IAM 19013 / LMG 5710 / NBRC 13948 / NRRL B-527 / VKM B-1787 / 2291 / W) protein is Putative regulatory protein CA_C1717.